A 285-amino-acid chain; its full sequence is MEIIIISGRSGAGKSVALRALEDAGYYCVDNIPLDLLPQLTDILSQSQSSVAISLDIRNIPNSAHSLKQTLSTLQKHHQIKIIFLEADRATLIRRYSDSRRLHPLSLKDLSLEAAIDEEYRYLEPLIQHANLILDTTHLSTHSLAERLREFLRGNSEKELKIIVESFGFKYGIPLDADYVFDVRFLPNPHWDPTLRPMTGLEAPVAEFLNSHTEVNEFIYLTRHYIDTWLPMLEKNNRSYLTIAIGCTGGKHRSVYIAQQLGEYFQAKGKTVKIQHKSLERNKKI.

8–15 (GRSGAGKS) contributes to the ATP binding site. 56–59 (DIRN) serves as a coordination point for GTP.

It belongs to the RapZ-like family.

Its function is as follows. Displays ATPase and GTPase activities. This is Nucleotide-binding protein HI_1146 from Haemophilus influenzae (strain ATCC 51907 / DSM 11121 / KW20 / Rd).